A 481-amino-acid chain; its full sequence is Protein nucleotidyltransferase YdiU (481 aa).

ATP is bound by residues glycine 87, glycine 89, arginine 90, lysine 110, aspartate 122, glycine 123, arginine 173, and arginine 180. The active-site Proton acceptor is aspartate 249. Positions 250 and 259 each coordinate Mg(2+). Aspartate 259 contributes to the ATP binding site.

The protein belongs to the SELO family. The cofactor is Mg(2+). Requires Mn(2+) as cofactor.

The catalysed reaction is L-seryl-[protein] + ATP = 3-O-(5'-adenylyl)-L-seryl-[protein] + diphosphate. It catalyses the reaction L-threonyl-[protein] + ATP = 3-O-(5'-adenylyl)-L-threonyl-[protein] + diphosphate. The enzyme catalyses L-tyrosyl-[protein] + ATP = O-(5'-adenylyl)-L-tyrosyl-[protein] + diphosphate. It carries out the reaction L-histidyl-[protein] + UTP = N(tele)-(5'-uridylyl)-L-histidyl-[protein] + diphosphate. The catalysed reaction is L-seryl-[protein] + UTP = O-(5'-uridylyl)-L-seryl-[protein] + diphosphate. It catalyses the reaction L-tyrosyl-[protein] + UTP = O-(5'-uridylyl)-L-tyrosyl-[protein] + diphosphate. Functionally, nucleotidyltransferase involved in the post-translational modification of proteins. It can catalyze the addition of adenosine monophosphate (AMP) or uridine monophosphate (UMP) to a protein, resulting in modifications known as AMPylation and UMPylation. The protein is Protein nucleotidyltransferase YdiU of Mycobacterium sp. (strain KMS).